Here is a 235-residue protein sequence, read N- to C-terminus: Meiotically up-regulated gene 123 protein (235 aa).

Positions 1-14 are enriched in basic and acidic residues; it reads MERLATRSSHDDPY. Disordered stretches follow at residues 1–34, 58–83, and 169–235; these read MERLATRSSHDDPYSRSSLPTSNAINSNHESNGS, PLHSSPSIKSSSQNGKSSSKGLGGMR, and SRAD…FDSD. The segment covering 15–34 has biased composition (polar residues); sequence SRSSLPTSNAINSNHESNGS. Positions 61–77 are enriched in low complexity; sequence SSPSIKSSSQNGKSSSK. Positions 176–202 are enriched in polar residues; the sequence is ETTQSDGFESRSGSPTHDIQSYLVNRR. Phosphoserine is present on residues S180, S187, and S189. T191 is modified (phosphothreonine).

It is found in the cytoplasm. It localises to the nucleus. Its function is as follows. Involved in sporulation and has a role in meiosis. The polypeptide is Meiotically up-regulated gene 123 protein (mug123) (Schizosaccharomyces pombe (strain 972 / ATCC 24843) (Fission yeast)).